The chain runs to 88 residues: Protein ORGAN SIZE RELATED 1 (88 aa).

Residues 25–76 (ITARSVALLLFLSLLLLILPPFLPPLPPPPATLLLLPLLLMILLIFLAFSPS) are organ Size Related (OSR) domain. 2 helical membrane-spanning segments follow: residues 30–50 (VALL…LPPL) and 53–73 (PPAT…FLAF).

It belongs to the plant organ size related (OSR) protein family. Mostly expressed in flowers, and, to a lower extent, in leaves and cotyledons.

It is found in the membrane. The protein resides in the endoplasmic reticulum. It localises to the nucleus. Its subcellular location is the cytoplasm. Functionally, together with ARGOS and ARL, regulates organ growth and final organ size. Promotes both cell expansion and proliferation-dependent organ growth, in an ANT-dependent manner. This chain is Protein ORGAN SIZE RELATED 1, found in Arabidopsis thaliana (Mouse-ear cress).